We begin with the raw amino-acid sequence, 887 residues long: Alanine--tRNA ligase (887 aa).

4 residues coordinate Zn(2+): histidine 575, histidine 579, cysteine 677, and histidine 681.

It belongs to the class-II aminoacyl-tRNA synthetase family. The cofactor is Zn(2+).

It localises to the cytoplasm. It catalyses the reaction tRNA(Ala) + L-alanine + ATP = L-alanyl-tRNA(Ala) + AMP + diphosphate. Functionally, catalyzes the attachment of alanine to tRNA(Ala) in a two-step reaction: alanine is first activated by ATP to form Ala-AMP and then transferred to the acceptor end of tRNA(Ala). Also edits incorrectly charged Ser-tRNA(Ala) and Gly-tRNA(Ala) via its editing domain. The sequence is that of Alanine--tRNA ligase from Geobacillus kaustophilus (strain HTA426).